We begin with the raw amino-acid sequence, 143 residues long: Transcription antitermination protein NusB (143 aa).

This sequence belongs to the NusB family.

Its function is as follows. Involved in transcription antitermination. Required for transcription of ribosomal RNA (rRNA) genes. Binds specifically to the boxA antiterminator sequence of the ribosomal RNA (rrn) operons. In Mannheimia succiniciproducens (strain KCTC 0769BP / MBEL55E), this protein is Transcription antitermination protein NusB.